A 484-amino-acid chain; its full sequence is Probable efflux pump outer membrane protein TtgC (484 aa).

Positions 1-17 (MTKSLLSLAVTAFILGG) are cleaved as a signal peptide. Residue C18 is the site of N-palmitoyl cysteine attachment. C18 carries S-diacylglycerol cysteine lipidation.

Belongs to the outer membrane factor (OMF) (TC 1.B.17) family.

The protein resides in the cell outer membrane. Probable outer membrane component of the TtgABC efflux pump with unknown specificity. This is Probable efflux pump outer membrane protein TtgC (ttgC) from Pseudomonas putida (strain ATCC 47054 / DSM 6125 / CFBP 8728 / NCIMB 11950 / KT2440).